The chain runs to 318 residues: MIKKRNTTKISVIGAGSVGATTAYALMLSGVATEIVLVDVNKAKTEGEAMDLSHGADFVKPVNILSGDYKDTEGSDIVVITAGAAQKVGETRLQLINKNINIFKSIIPEVVKYNKDAILLVVSNPVDVLSYVTYKLSGFPKERVIGSGTVLDTSRLKHEIGKRYKIDPRNVNTYIMGEHGDSEIATWSVTNIQNIKIDEYANKENLEYNDNFRKEVYENVKNAAYEVINRKGATFYAIALAVTRIVKAILGDEKTILPVSTLVENYYGIKDVYLGMPCIVGGSGIEKALSIDLNKTEASKLVKSAETLKNTLNNASGL.

NAD(+) contacts are provided by residues Val-18, Asp-39, Lys-44, Tyr-69, and 83–84 (GA). The substrate site is built by Gln-86 and Arg-92. NAD(+) contacts are provided by residues Ser-105, 122–124 (VSN), and Ser-147. Substrate is bound at residue 124–127 (NPVD). 152-155 (DTSR) is a binding site for substrate. Catalysis depends on His-179, which acts as the Proton acceptor. Phosphotyrosine is present on Tyr-225. Thr-234 contacts substrate.

Belongs to the LDH/MDH superfamily. LDH family. Homotetramer.

Its subcellular location is the cytoplasm. It catalyses the reaction (S)-lactate + NAD(+) = pyruvate + NADH + H(+). It participates in fermentation; pyruvate fermentation to lactate; (S)-lactate from pyruvate: step 1/1. Its function is as follows. Catalyzes the conversion of lactate to pyruvate. The chain is L-lactate dehydrogenase from Clostridium botulinum (strain Okra / Type B1).